Reading from the N-terminus, the 226-residue chain is ATP synthase subunit a (226 aa).

5 helical membrane-spanning segments follow: residues 18–38 (LSLN…SYWL), 74–94 (FISL…PYIF), 100–120 (LTLT…YGWI), 158–180 (LAVR…GNTG), and 197–217 (IALL…FAVL).

This sequence belongs to the ATPase A chain family. As to quaternary structure, F-type ATPases have 2 components, CF(1) - the catalytic core - and CF(0) - the membrane proton channel. CF(1) has five subunits: alpha(3), beta(3), gamma(1), delta(1), epsilon(1). CF(0) has three main subunits: a, b and c.

It is found in the mitochondrion inner membrane. Functionally, mitochondrial membrane ATP synthase (F(1)F(0) ATP synthase or Complex V) produces ATP from ADP in the presence of a proton gradient across the membrane which is generated by electron transport complexes of the respiratory chain. F-type ATPases consist of two structural domains, F(1) - containing the extramembraneous catalytic core and F(0) - containing the membrane proton channel, linked together by a central stalk and a peripheral stalk. During catalysis, ATP synthesis in the catalytic domain of F(1) is coupled via a rotary mechanism of the central stalk subunits to proton translocation. Key component of the proton channel; it may play a direct role in the translocation of protons across the membrane. This is ATP synthase subunit a (mt:ATPase6) from Anopheles gambiae (African malaria mosquito).